We begin with the raw amino-acid sequence, 132 residues long: Small ribosomal subunit protein uS8 (132 aa).

It belongs to the universal ribosomal protein uS8 family. As to quaternary structure, part of the 30S ribosomal subunit. Contacts proteins S5 and S12.

One of the primary rRNA binding proteins, it binds directly to 16S rRNA central domain where it helps coordinate assembly of the platform of the 30S subunit. In Rhizobium meliloti (strain 1021) (Ensifer meliloti), this protein is Small ribosomal subunit protein uS8.